The sequence spans 214 residues: Imidazole glycerol phosphate synthase subunit HisH (214 aa).

The Glutamine amidotransferase type-1 domain maps to 2–214 (RVALIDYGSG…LIANFLRWAP (213 aa)). Cysteine 88 serves as the catalytic Nucleophile. Active-site residues include histidine 194 and glutamate 196.

Heterodimer of HisH and HisF.

It localises to the cytoplasm. It catalyses the reaction 5-[(5-phospho-1-deoxy-D-ribulos-1-ylimino)methylamino]-1-(5-phospho-beta-D-ribosyl)imidazole-4-carboxamide + L-glutamine = D-erythro-1-(imidazol-4-yl)glycerol 3-phosphate + 5-amino-1-(5-phospho-beta-D-ribosyl)imidazole-4-carboxamide + L-glutamate + H(+). The enzyme catalyses L-glutamine + H2O = L-glutamate + NH4(+). It participates in amino-acid biosynthesis; L-histidine biosynthesis; L-histidine from 5-phospho-alpha-D-ribose 1-diphosphate: step 5/9. Functionally, IGPS catalyzes the conversion of PRFAR and glutamine to IGP, AICAR and glutamate. The HisH subunit catalyzes the hydrolysis of glutamine to glutamate and ammonia as part of the synthesis of IGP and AICAR. The resulting ammonia molecule is channeled to the active site of HisF. The sequence is that of Imidazole glycerol phosphate synthase subunit HisH from Rhodospirillum rubrum (strain ATCC 11170 / ATH 1.1.1 / DSM 467 / LMG 4362 / NCIMB 8255 / S1).